The primary structure comprises 698 residues: Serine/threonine-protein kinase Nek8 (698 aa).

The Protein kinase domain occupies 4-258 (YERIRVVGRG…LSHIMAQPLC (255 aa)). ATP-binding positions include 10–18 (VGRGAFGIV) and lysine 33. Catalysis depends on aspartate 128, which acts as the Proton acceptor. Residue threonine 162 is modified to Phosphothreonine; by autocatalysis. The tract at residues 281-307 (LTPGTPMAPGSTGSRATSARCRGVPRG) is disordered. 5 RCC1 repeats span residues 415 to 466 (RGII…ALSA), 467 to 518 (DGEL…ILTS), 520 to 571 (GRVL…TLLC), 585 to 636 (SGAC…AIGA), and 638 to 689 (GEVY…LAVR).

The protein belongs to the protein kinase superfamily. NEK Ser/Thr protein kinase family. NIMA subfamily. In terms of assembly, interacts with PKD2; may regulate PKD2 targeting to the cilium. Interacts with ANKS6. Component of a complex containing at least ANKS6, INVS, NEK8 and NPHP3. ANKS6 may organize complex assembly by linking INVS and NPHP3 to NEK8 and INVS may target it to the proximal ciliary axoneme. Interacts with ANKS3. Mg(2+) serves as cofactor.

It localises to the cytoplasm. The protein localises to the cytoskeleton. It is found in the cell projection. Its subcellular location is the cilium. The protein resides in the cilium axoneme. It localises to the microtubule organizing center. The protein localises to the centrosome. It carries out the reaction L-seryl-[protein] + ATP = O-phospho-L-seryl-[protein] + ADP + H(+). It catalyses the reaction L-threonyl-[protein] + ATP = O-phospho-L-threonyl-[protein] + ADP + H(+). Functionally, required for renal tubular integrity. May regulate local cytoskeletal structure in kidney tubule epithelial cells. May regulate ciliary biogenesis through targeting of proteins to the cilia. Plays a role in organogenesis and is involved in the regulation of the Hippo signaling pathway. This chain is Serine/threonine-protein kinase Nek8 (Nek8), found in Rattus norvegicus (Rat).